Here is a 552-residue protein sequence, read N- to C-terminus: Membrane protein insertase YidC (552 aa).

The helical transmembrane segment at 6 to 26 threads the bilayer; it reads NLLLAAIAAVILMLFIRWNHF. Polar residues-rich tracts occupy residues 32 to 41 and 60 to 70; these read QHQAGNTPAG and PTASDTPQATA. A disordered region spans residues 32 to 70; sequence QHQAGNTPAGSSIAAIAPDSNGDIPSAVPTASDTPQATA. 4 helical membrane-spanning segments follow: residues 365–387, 431–451, 472–492, and 508–528; these read WGLAIIGLTLSVKLLFFPLSAAS, FGGCLPLLIQMPVFIALYWVL, MDPYFVLPIIYGATMWIMQKL, and LPFVFTFMFLWFPAGLVLYWV.

Belongs to the OXA1/ALB3/YidC family. Type 1 subfamily. Interacts with the Sec translocase complex via SecD. Specifically interacts with transmembrane segments of nascent integral membrane proteins during membrane integration.

It is found in the cell inner membrane. Functionally, required for the insertion and/or proper folding and/or complex formation of integral membrane proteins into the membrane. Involved in integration of membrane proteins that insert both dependently and independently of the Sec translocase complex, as well as at least some lipoproteins. Aids folding of multispanning membrane proteins. The sequence is that of Membrane protein insertase YidC from Cellvibrio japonicus (strain Ueda107) (Pseudomonas fluorescens subsp. cellulosa).